The following is an 83-amino-acid chain: Large ribosomal subunit protein bL27c (83 aa).

A disordered region spans residues M1–L21.

The protein belongs to the bacterial ribosomal protein bL27 family.

It is found in the plastid. It localises to the chloroplast. The chain is Large ribosomal subunit protein bL27c from Phaeodactylum tricornutum (strain CCAP 1055/1).